The sequence spans 570 residues: Peptidyl-prolyl cis-trans isomerase FKBP9 (570 aa).

The signal sequence occupies residues 1–24 (MAFGARGWRRWSLLLLLLWVTGQA). 4 PPIase FKBP-type domains span residues 54 to 142 (GDFV…VDIW), 166 to 254 (SDFV…LDLH), 278 to 365 (GDFL…IDFH), and 389 to 477 (GDYL…LELV). 4 N-linked (GlcNAc...) asparagine glycosylation sites follow: N174, N286, N302, and N397. 2 consecutive EF-hand domains span residues 488–523 (WNGE…QVAS) and 533–568 (NAEM…TKHD). Ca(2+) is bound by residues D501, D503, N505, E507, E512, D546, N548, D550, K552, and E557. Residues 567–570 (HDEL) carry the Prevents secretion from ER motif.

In terms of processing, phosphorylated.

The protein localises to the endoplasmic reticulum lumen. It catalyses the reaction [protein]-peptidylproline (omega=180) = [protein]-peptidylproline (omega=0). Its activity is regulated as follows. Inhibited by FK506. PPIases accelerate the folding of proteins during protein synthesis. In Rattus norvegicus (Rat), this protein is Peptidyl-prolyl cis-trans isomerase FKBP9 (Fkbp9).